The primary structure comprises 279 residues: MILDGKGLAARRLELLKEDIIEGGLSPTLATVIVGDDPASHMYVRMKHRACEQVGISSVNISLPEDTTTRTILERIRQLNEDPDIDGILVQLPLPKSIDTEAVLAAILPEKDVDGFHPLNMGRLVTGLPGPRPCTPNGIMTLLHENKISIAGKRAVVVGRSVDVGRPIALLLLHADATVTMCHSKTENLKEITKQADILVSAAGKAGIITADMVKPGATVVDVGTNQVNGKLCGDVAFDEVEKIAGAITPVPGGVGPMTIASLMENTADIARNRCGHFM.

Residues 159–161 (GRS), serine 184, and threonine 225 each bind NADP(+).

The protein belongs to the tetrahydrofolate dehydrogenase/cyclohydrolase family. Homodimer.

It catalyses the reaction (6R)-5,10-methylene-5,6,7,8-tetrahydrofolate + NADP(+) = (6R)-5,10-methenyltetrahydrofolate + NADPH. The enzyme catalyses (6R)-5,10-methenyltetrahydrofolate + H2O = (6R)-10-formyltetrahydrofolate + H(+). It functions in the pathway one-carbon metabolism; tetrahydrofolate interconversion. Catalyzes the oxidation of 5,10-methylenetetrahydrofolate to 5,10-methenyltetrahydrofolate and then the hydrolysis of 5,10-methenyltetrahydrofolate to 10-formyltetrahydrofolate. The chain is Bifunctional protein FolD from Methanospirillum hungatei JF-1 (strain ATCC 27890 / DSM 864 / NBRC 100397 / JF-1).